Reading from the N-terminus, the 319-residue chain is ATP-dependent 6-phosphofructokinase (319 aa).

Residue glycine 11 coordinates ATP. 21–25 serves as a coordination point for ADP; it reads RAVVR. Residues 72–73 and 102–105 each bind ATP; these read RC and GDGS. Aspartate 103 contributes to the Mg(2+) binding site. Residue 125-127 participates in substrate binding; the sequence is TID. The active-site Proton acceptor is the aspartate 127. Residue arginine 154 participates in ADP binding. Substrate contacts are provided by residues arginine 162 and 169–171; that span reads MGR. ADP is bound by residues 185-187, arginine 211, and 213-215; these read GAE and KLH. Residues glutamate 222, arginine 243, and 249–252 each bind substrate; that span reads HLQR.

Belongs to the phosphofructokinase type A (PFKA) family. ATP-dependent PFK group I subfamily. Prokaryotic clade 'B1' sub-subfamily. Homotetramer. Requires Mg(2+) as cofactor.

It localises to the cytoplasm. It catalyses the reaction beta-D-fructose 6-phosphate + ATP = beta-D-fructose 1,6-bisphosphate + ADP + H(+). Its pathway is carbohydrate degradation; glycolysis; D-glyceraldehyde 3-phosphate and glycerone phosphate from D-glucose: step 3/4. With respect to regulation, allosterically activated by ADP and other diphosphonucleosides, and allosterically inhibited by phosphoenolpyruvate. Its function is as follows. Catalyzes the phosphorylation of D-fructose 6-phosphate to fructose 1,6-bisphosphate by ATP, the first committing step of glycolysis. The sequence is that of ATP-dependent 6-phosphofructokinase from Clostridium novyi (strain NT).